Here is a 399-residue protein sequence, read N- to C-terminus: Protein phosphatase 2C 37 (399 aa).

The PPM-type phosphatase domain maps to lysine 104 to leucine 389. Mn(2+) is bound by residues aspartate 142 and glycine 143. Positions 146, 148, 208, and 210 each coordinate Zn(2+). The Mn(2+) site is built by aspartate 327, aspartate 331, and aspartate 380.

This sequence belongs to the PP2C family. Interacts with AKT2/AKT3. Interacts with ABA-bounded PYR1, PYL1, PYL2, PYL3, PYL4, PYL9 and PYL12, and with free PYL2, PYL3, PYL4 and PYL13. Binds to and inactivates SLAC1 and SRK2E. The inactivation of SRK2E does not require phosphatase activity. Interacts with CBL1, CBL2, CBL3, CBL5, and CBL7, but not CBL4, CBL6, and CBL9. Interacts with RGLG1 and RGLG5. Interacts with KIN10. It depends on Mg(2+) as a cofactor. The cofactor is Mn(2+). Ubiquitinated by RGLG1 and RGLG5 in response to abscisic acid (ABA). Ubiquitination of PP2CA leads to its degradation by the proteasome. Mostly expressed in seeds and leaves, and, to a lower extent, in roots, stems, and flowers, particularly in siliques. Essentially found in the phloem.

The enzyme catalyses O-phospho-L-seryl-[protein] + H2O = L-seryl-[protein] + phosphate. It carries out the reaction O-phospho-L-threonyl-[protein] + H2O = L-threonyl-[protein] + phosphate. Its activity is regulated as follows. Repressed by PYR/PYL/RCAR ABA receptors in an ABA-dependent manner. Major negative regulator of abscisic acid (ABA) responses during seed germination and cold acclimation. Confers insensitivity to ABA. Modulates negatively the AKT2/3 activity, which mediates K(+) transport and membrane polarization during stress situations, probably by dephosphorylation. Prevents stomata closure by inactivating the S-type anion efflux channel SLAC1 and its activator SRK2E. Represses KIN10 activity by the specific dephosphorylation of its T-loop Thr-198, leading to a poststress inactivation of SnRK1 signaling. The protein is Protein phosphatase 2C 37 (PP2CA) of Arabidopsis thaliana (Mouse-ear cress).